Here is a 97-residue protein sequence, read N- to C-terminus: Prophage lipoprotein Bor homolog (97 aa).

Residues 1-16 (MKKMLLATALALLITG) form the signal peptide. The N-palmitoyl cysteine moiety is linked to residue C17. A lipid anchor (S-diacylglycerol cysteine) is attached at C17.

Belongs to the lambda phage bor family.

The protein localises to the cell membrane. The sequence is that of Prophage lipoprotein Bor homolog (borD) from Escherichia coli (strain K12).